The following is a 209-amino-acid chain: NADH-quinone oxidoreductase subunit C (209 aa).

Belongs to the complex I 30 kDa subunit family. NDH-1 is composed of 14 different subunits. Subunits NuoB, C, D, E, F, and G constitute the peripheral sector of the complex.

The protein localises to the cell inner membrane. It catalyses the reaction a quinone + NADH + 5 H(+)(in) = a quinol + NAD(+) + 4 H(+)(out). In terms of biological role, NDH-1 shuttles electrons from NADH, via FMN and iron-sulfur (Fe-S) centers, to quinones in the respiratory chain. The immediate electron acceptor for the enzyme in this species is believed to be ubiquinone. Couples the redox reaction to proton translocation (for every two electrons transferred, four hydrogen ions are translocated across the cytoplasmic membrane), and thus conserves the redox energy in a proton gradient. The chain is NADH-quinone oxidoreductase subunit C from Phenylobacterium zucineum (strain HLK1).